The following is a 100-amino-acid chain: Gas vesicle protein J (100 aa).

It belongs to the gas vesicle GvpA family. As to quaternary structure, interacts with GvpA.

The protein localises to the gas vesicle. Functionally, a minor component of the gas vesicle, might be involved in nucleating gas vesicle formation. This protein could be important for the shape determination of the gas vesicle. Gas vesicles (GV) are hollow, gas filled proteinaceous nanostructures. During planktonic growth they allow positioning of the organism at a favorable depth for light or nutrient acquisition. Its function is as follows. When a minimal gvp locus (gvpA2-gvpR-gvpN-gvpF-gvpG-gvpL-gvpS-gvpK-gvpJ-gvpT-gvpU, called pNL29) is expressed in E.coli gas vesicles are made. The chain is Gas vesicle protein J from Priestia megaterium (Bacillus megaterium).